A 430-amino-acid polypeptide reads, in one-letter code: Enolase (430 aa).

Residue Gln163 participates in (2R)-2-phosphoglycerate binding. Glu205 serves as the catalytic Proton donor. Residues Asp242, Glu287, and Asp314 each contribute to the Mg(2+) site. (2R)-2-phosphoglycerate is bound by residues Lys339, Arg368, Ser369, and Lys390. The Proton acceptor role is filled by Lys339.

The protein belongs to the enolase family. The cofactor is Mg(2+).

It localises to the cytoplasm. Its subcellular location is the secreted. The protein resides in the cell surface. It catalyses the reaction (2R)-2-phosphoglycerate = phosphoenolpyruvate + H2O. It participates in carbohydrate degradation; glycolysis; pyruvate from D-glyceraldehyde 3-phosphate: step 4/5. In terms of biological role, catalyzes the reversible conversion of 2-phosphoglycerate (2-PG) into phosphoenolpyruvate (PEP). It is essential for the degradation of carbohydrates via glycolysis. The sequence is that of Enolase from Listeria innocua serovar 6a (strain ATCC BAA-680 / CLIP 11262).